The following is a 371-amino-acid chain: Putative glutamate--cysteine ligase 2 (371 aa).

It belongs to the glutamate--cysteine ligase type 2 family. YbdK subfamily.

The enzyme catalyses L-cysteine + L-glutamate + ATP = gamma-L-glutamyl-L-cysteine + ADP + phosphate + H(+). In terms of biological role, ATP-dependent carboxylate-amine ligase which exhibits weak glutamate--cysteine ligase activity. The polypeptide is Putative glutamate--cysteine ligase 2 (Cupriavidus taiwanensis (strain DSM 17343 / BCRC 17206 / CCUG 44338 / CIP 107171 / LMG 19424 / R1) (Ralstonia taiwanensis (strain LMG 19424))).